Reading from the N-terminus, the 256-residue chain is UstYa family oxidase phomYc (256 aa).

The helical transmembrane segment at 38–58 (LVLVLQFVLIISLLASLHILG) threads the bilayer. N-linked (GlcNAc...) asparagine glycans are attached at residues N64 and N132. Residues 158-162 (HQLHC) carry the HXXHC 1 motif. A glycan (N-linked (GlcNAc...) asparagine) is linked at N179. Positions 193-197 (HIDHC) match the HXXHC 2 motif.

This sequence belongs to the ustYa family.

The protein resides in the membrane. Its pathway is mycotoxin biosynthesis. UstYa family oxidase; part of the gene cluster that mediates the biosynthesis of the phomopsins, a group of hexapeptide mycotoxins which infects lupins and causes lupinosis disease in livestock. Within the pathway, phomYc catalyzes the desaturation of the Ile moiety into 2,3-dehydroisoleucine (dIle). The pathway starts with the processing of the precursor phomA by several endopeptidases including kexin proteases as well as the cluster-specific S41 family peptidase phomP1 and the oligopeptidase phomG to produce 10 identical copies of the hexapeptide Tyr-Val-Ile-Pro-Ile-Asp. After being excised from the precursor peptide, the core peptides are cyclized and modified post-translationally by enzymes encoded within the gene cluster. The timing and order of proteolysis of the phomA precursor and PTMs are still unknown. Two tyrosinase-like enzymes, phomQ1 and phomQ2, catalyze the chlorination and hydroxylation of Tyr, respectively. PhomYb, is proposed to be involved in the construction of the macrocyclic structure. The other 4 ustYa family proteins may be involved in PTMs that generate the unique structure of phomopsin A. PhomYa is required for the hydroxylation of C-beta of Tyr. PhomYc, phomYd, and phomYe are responsible for the biosynthesis of 2,3-dehydroisoleucine (dIle), 2,3-dehydroaspartic acid (dAsp), and 3,4-dehydroproline (dPro), respectively. While dIle formation by phomYc is indispensable for the installation of dAsp by phomYd, the order of the other PTMs have not been elucidated yet. Most of the biosynthetic enzymes likely have broad substrate specificity, and thus, there might be a metabolic grid from a precursor to phomopsin A. The enzyme(s) responsible for the biosynthesis of 3,4-dehydrovaline (dVal) have also not been identified yet. Finally, phomM acts as an S-adenosylmethionine-dependent alpha-N-methyltransferase that catalyzes two successive N-methylation reactions, converting N-desmethyl-phomopsin A to phomopsin A and phomopsin A further to an N,N-dimethylated congener called phomopsin E. The sequence is that of UstYa family oxidase phomYc from Diaporthe leptostromiformis (Lupinosis disease fungus).